The primary structure comprises 464 residues: Bifunctional protein GlmU (464 aa).

Residues 1–236 are pyrophosphorylase; that stretch reads MRAVILAAGL…PTEALGVNTR (236 aa). UDP-N-acetyl-alpha-D-glucosamine contacts are provided by residues 6 to 9, K20, and 77 to 78; these read LAAG and GT. Residue D102 coordinates Mg(2+). The UDP-N-acetyl-alpha-D-glucosamine site is built by G145, E161, N176, and N234. Position 234 (N234) interacts with Mg(2+). The linker stretch occupies residues 237-257; it reads WDLALVENVIKLKIARYWAER. Positions 258–464 are N-acetyltransferase; it reads GVTVHYPETV…GRGKKKLQKD (207 aa). 2 residues coordinate UDP-N-acetyl-alpha-D-glucosamine: R340 and K358. Residue H370 is the Proton acceptor of the active site. The UDP-N-acetyl-alpha-D-glucosamine site is built by Y373 and N384. Acetyl-CoA-binding positions include A387, 393–394, S412, G430, and R447; that span reads NY.

In the N-terminal section; belongs to the N-acetylglucosamine-1-phosphate uridyltransferase family. The protein in the C-terminal section; belongs to the transferase hexapeptide repeat family. In terms of assembly, homotrimer. Requires Mg(2+) as cofactor.

The protein localises to the cytoplasm. The catalysed reaction is alpha-D-glucosamine 1-phosphate + acetyl-CoA = N-acetyl-alpha-D-glucosamine 1-phosphate + CoA + H(+). It catalyses the reaction N-acetyl-alpha-D-glucosamine 1-phosphate + UTP + H(+) = UDP-N-acetyl-alpha-D-glucosamine + diphosphate. It participates in nucleotide-sugar biosynthesis; UDP-N-acetyl-alpha-D-glucosamine biosynthesis; N-acetyl-alpha-D-glucosamine 1-phosphate from alpha-D-glucosamine 6-phosphate (route II): step 2/2. The protein operates within nucleotide-sugar biosynthesis; UDP-N-acetyl-alpha-D-glucosamine biosynthesis; UDP-N-acetyl-alpha-D-glucosamine from N-acetyl-alpha-D-glucosamine 1-phosphate: step 1/1. It functions in the pathway bacterial outer membrane biogenesis; LPS lipid A biosynthesis. Functionally, catalyzes the last two sequential reactions in the de novo biosynthetic pathway for UDP-N-acetylglucosamine (UDP-GlcNAc). The C-terminal domain catalyzes the transfer of acetyl group from acetyl coenzyme A to glucosamine-1-phosphate (GlcN-1-P) to produce N-acetylglucosamine-1-phosphate (GlcNAc-1-P), which is converted into UDP-GlcNAc by the transfer of uridine 5-monophosphate (from uridine 5-triphosphate), a reaction catalyzed by the N-terminal domain. The protein is Bifunctional protein GlmU of Aquifex aeolicus (strain VF5).